The primary structure comprises 400 residues: 1-deoxy-D-xylulose 5-phosphate reductoisomerase (400 aa).

The NADPH site is built by Thr-10, Gly-11, Ser-12, Ile-13, Gly-36, Asn-38, and Asn-124. Residue Lys-125 coordinates 1-deoxy-D-xylulose 5-phosphate. Position 126 (Glu-126) interacts with NADPH. Mn(2+) is bound at residue Asp-150. Positions 151, 152, 186, and 209 each coordinate 1-deoxy-D-xylulose 5-phosphate. Mn(2+) is bound at residue Glu-152. NADPH is bound at residue Gly-215. 1-deoxy-D-xylulose 5-phosphate contacts are provided by Ser-222, Asn-227, Lys-228, and Glu-231. Glu-231 serves as a coordination point for Mn(2+).

The protein belongs to the DXR family. Requires Mg(2+) as cofactor. Mn(2+) is required as a cofactor.

The catalysed reaction is 2-C-methyl-D-erythritol 4-phosphate + NADP(+) = 1-deoxy-D-xylulose 5-phosphate + NADPH + H(+). Its pathway is isoprenoid biosynthesis; isopentenyl diphosphate biosynthesis via DXP pathway; isopentenyl diphosphate from 1-deoxy-D-xylulose 5-phosphate: step 1/6. Functionally, catalyzes the NADPH-dependent rearrangement and reduction of 1-deoxy-D-xylulose-5-phosphate (DXP) to 2-C-methyl-D-erythritol 4-phosphate (MEP). The sequence is that of 1-deoxy-D-xylulose 5-phosphate reductoisomerase from Aliivibrio fischeri (strain ATCC 700601 / ES114) (Vibrio fischeri).